We begin with the raw amino-acid sequence, 328 residues long: 2,4-dinitroanisole O-demethylase subunit alpha (328 aa).

Residues Met-1 to Ser-9 constitute a propeptide that is removed on maturation. The Zn(2+) site is built by His-101, His-103, Asp-105, His-168, His-225, and Cys-247.

It belongs to the metallo-beta-lactamase superfamily. Part of the complex DnhAB composed of the 2,4-dinitroanisole O-demethylase alpha (DnhA) and beta (DnhB) subunits. It depends on Zn(2+) as a cofactor.

The catalysed reaction is 2,4-dinitroanisole + H2O = 2,4-dinitrophenol + methanol + H(+). Functionally, involved in the degradation of 2,4-dinitroanisole (DNAN), an insensitive munition ingredient used in explosive formulations as a replacement for 2,4,6-trinitrotoluene (TNT). Catalyzes the removal of the methyl group from 2,4-dinitroanisole (DNAN) to yield 2,4-dinitrophenol (2,4-DNP) and methanol. This Nocardioides sp. (strain JS1661) protein is 2,4-dinitroanisole O-demethylase subunit alpha.